The sequence spans 61 residues: Large ribosomal subunit protein uL30 (61 aa).

Belongs to the universal ribosomal protein uL30 family. In terms of assembly, part of the 50S ribosomal subunit.

The sequence is that of Large ribosomal subunit protein uL30 from Bordetella parapertussis (strain 12822 / ATCC BAA-587 / NCTC 13253).